The following is a 335-amino-acid chain: Mitochondrial amidoxime reducing component 2 (335 aa).

Residues 1-35 constitute a mitochondrion transit peptide; it reads MGASSSSALARLGLPAQARPRWLGVAVLGLAAVAL. Residues Lys-59, Lys-138, and Lys-144 each participate in a glycyl lysine isopeptide (Lys-Gly) (interchain with G-Cter in ubiquitin) cross-link. N6-acetyllysine; alternate is present on Lys-156. Lys-156 participates in a covalent cross-link: Glycyl lysine isopeptide (Lys-Gly) (interchain with G-Cter in ubiquitin); alternate. Glycyl lysine isopeptide (Lys-Gly) (interchain with G-Cter in ubiquitin) cross-links involve residues Lys-173, Lys-187, Lys-287, and Lys-294. In terms of domain architecture, MOSC spans 188–334; sequence GRTSRKLLPT…LRVGDPVYRM (147 aa).

In terms of assembly, component of a complex composed of cytochrome b5, NADH-cytochrome b5 reductase (CYB5R3) and MTARC2. Mo-molybdopterin is required as a cofactor. In terms of processing, ubiquitinated by PRKN during mitophagy, leading to its degradation and enhancement of mitophagy. Deubiquitinated by USP30.

It is found in the mitochondrion outer membrane. The protein resides in the peroxisome. The enzyme catalyses N(omega)-hydroxy-L-arginine + 2 Fe(II)-[cytochrome b5] + 2 H(+) = L-arginine + 2 Fe(III)-[cytochrome b5] + H2O. Its function is as follows. Catalyzes the reduction of N-oxygenated molecules, acting as a counterpart of cytochrome P450 and flavin-containing monooxygenases in metabolic cycles. As a component of prodrug-converting system, reduces a multitude of N-hydroxylated prodrugs particularly amidoximes, leading to increased drug bioavailability. May be involved in mitochondrial N(omega)-hydroxy-L-arginine (NOHA) reduction, regulating endogenous nitric oxide levels and biosynthesis. Postulated to cleave the N-OH bond of N-hydroxylated substrates in concert with electron transfer from NADH to cytochrome b5 reductase then to cytochrome b5, the ultimate electron donor that primes the active site for substrate reduction. The sequence is that of Mitochondrial amidoxime reducing component 2 (MTARC2) from Macaca fascicularis (Crab-eating macaque).